The primary structure comprises 423 residues: Structure-specific endonuclease subunit SLX1 (423 aa).

The region spanning 23–105 is the GIY-YIG domain; the sequence is AFYCCYLLRS…QNTKVSRHAD (83 aa). 2 disordered regions span residues 300 to 334 and 365 to 406; these read RRRR…DALQ and AHRP…LGLQ.

This sequence belongs to the SLX1 family. In terms of assembly, forms a heterodimer with SLX4. A divalent metal cation serves as cofactor.

The protein localises to the nucleus. In terms of biological role, catalytic subunit of the SLX1-SLX4 structure-specific endonuclease that resolves DNA secondary structures generated during DNA repair and recombination. Has endonuclease activity towards branched DNA substrates, introducing single-strand cuts in duplex DNA close to junctions with ss-DNA. The protein is Structure-specific endonuclease subunit SLX1 of Paracoccidioides brasiliensis (strain Pb03).